The primary structure comprises 472 residues: Trigger factor (472 aa).

A PPIase FKBP-type domain is found at 172–257; that stretch reads GDEVRFDFKG…IKEITSVKPQ (86 aa). Polar residues-rich tracts occupy residues 439-449 and 461-472; these read NQPKDTASTLS and KTSNTKKVASKK. Residues 439 to 472 are disordered; it reads NQPKDTASTLSKQEDKPKVAKAKTSNTKKVASKK.

It belongs to the FKBP-type PPIase family. Tig subfamily.

Its subcellular location is the cytoplasm. It catalyses the reaction [protein]-peptidylproline (omega=180) = [protein]-peptidylproline (omega=0). Functionally, involved in protein export. Acts as a chaperone by maintaining the newly synthesized protein in an open conformation. Functions as a peptidyl-prolyl cis-trans isomerase. The sequence is that of Trigger factor from Ureaplasma urealyticum serovar 10 (strain ATCC 33699 / Western).